The following is a 93-amino-acid chain: MEFYLEIDPVTLNLIILVASYVILLLVFLVSCVLYDCRGKDPSKEYAPESTLNAQPSIRVVVTQHSAHASHWARGPSLHLKDPAPLGKKSTVV.

The chain crosses the membrane as a helical span at residues 14–34 (LIILVASYVILLLVFLVSCVL). The tract at residues 70–93 (SHWARGPSLHLKDPAPLGKKSTVV) is disordered.

The protein resides in the membrane. The sequence is that of Small integral membrane protein 36 from Mus musculus (Mouse).